The chain runs to 155 residues: RNA pyrophosphohydrolase (155 aa).

One can recognise a Nudix hydrolase domain in the interval 6–148 (GYRANVAIVL…KQEVYRKALT (143 aa)). The short motif at 38–59 (GGVDTGETPLQAMYRELHEEIG) is the Nudix box element.

The protein belongs to the Nudix hydrolase family. RppH subfamily. A divalent metal cation is required as a cofactor.

In terms of biological role, accelerates the degradation of transcripts by removing pyrophosphate from the 5'-end of triphosphorylated RNA, leading to a more labile monophosphorylated state that can stimulate subsequent ribonuclease cleavage. This is RNA pyrophosphohydrolase from Francisella tularensis subsp. mediasiatica (strain FSC147).